Here is a 596-residue protein sequence, read N- to C-terminus: Meiosis-specific protein ASY1 (596 aa).

The HORMA domain occupies 15–228; it reads QDSLLLTRNL…SKHLVLTLKV (214 aa). The disordered stretch occupies residues 235 to 303; sequence CEDENDDMQD…NTQDPAENEQ (69 aa). Positions 282–295 are enriched in acidic residues; sequence QDDDDGEVDEDDNT. An SWIRM domain is found at 351-449; that stretch reads SKTGKDMYIK…ASSNRRLGKR (99 aa). Residues 562 to 596 are disordered; the sequence is TVNCSQASQDRRGRKTSMVREPILQYSKRQKSQAN.

Interacts with ASY3.

The protein localises to the chromosome. Its subcellular location is the nucleus. Its function is as follows. Required for normal meiosis in male and female gametophytes. Plays a crucial role in coordinating the activity of DMC1, a key member of the homologous recombination machinery. Acts at the interface between the developing chromosome axes and the recombination machinery to ensure DMC1-mediated interhomolog recombination. This Arabidopsis thaliana (Mouse-ear cress) protein is Meiosis-specific protein ASY1.